Consider the following 496-residue polypeptide: Deoxyribodipyrimidine photo-lyase (496 aa).

The Photolyase/cryptochrome alpha/beta domain occupies 28–160 (GPVVYWMFRD…EVDAHNVVPM (133 aa)). FAD is bound by residues Tyr-256, 269-273 (LSGLS), 307-315 (ELIVRRELS), and 415-417 (DGR). DNA is bound at residue Glu-307.

This sequence belongs to the DNA photolyase class-2 family. The cofactor is FAD. In terms of tissue distribution, highly expressed in flowers. Expressed in roots and stems.

The protein localises to the nucleus. It carries out the reaction cyclobutadipyrimidine (in DNA) = 2 pyrimidine residues (in DNA).. Involved in repair of UV radiation-induced DNA damage. Catalyzes the light-dependent monomerization (300-600 nm) of cyclobutylpyrimidine dimers (CPDs), which are formed between adjacent bases on the same DNA strand upon exposure to ultraviolet radiation. Required for plant survival in the presence of UV-B light. Not involved in the repair of (6-4) photoproducts. The protein is Deoxyribodipyrimidine photo-lyase (PHR1) of Arabidopsis thaliana (Mouse-ear cress).